The following is a 272-amino-acid chain: 1,4-dihydroxy-2-naphthoyl-CoA synthase (272 aa).

Residues Arg33, 72 to 76 (SGGDQ), Tyr84, 116 to 120 (YAIGG), Thr142, Ser148, Tyr245, and Lys260 contribute to the substrate site. Hydrogencarbonate is bound at residue 141 to 143 (QTG). Residues 253 to 264 (GRDAFKEKRDPD) show a composition bias toward basic and acidic residues. Positions 253–272 (GRDAFKEKRDPDFDQFPKFP) are disordered.

This sequence belongs to the enoyl-CoA hydratase/isomerase family. MenB subfamily. Hydrogencarbonate is required as a cofactor.

It catalyses the reaction 2-succinylbenzoyl-CoA + H(+) = 1,4-dihydroxy-2-naphthoyl-CoA + H2O. It participates in quinol/quinone metabolism; 1,4-dihydroxy-2-naphthoate biosynthesis; 1,4-dihydroxy-2-naphthoate from chorismate: step 6/7. Its pathway is quinol/quinone metabolism; menaquinone biosynthesis. Converts o-succinylbenzoyl-CoA (OSB-CoA) to 1,4-dihydroxy-2-naphthoyl-CoA (DHNA-CoA). In Staphylococcus haemolyticus (strain JCSC1435), this protein is 1,4-dihydroxy-2-naphthoyl-CoA synthase.